We begin with the raw amino-acid sequence, 493 residues long: Probable cytosol aminopeptidase (493 aa).

Residues Lys-258 and Asp-263 each contribute to the Mn(2+) site. Lys-270 is a catalytic residue. Residues Asp-281, Asp-340, and Glu-342 each contribute to the Mn(2+) site. Residue Arg-344 is part of the active site.

It belongs to the peptidase M17 family. Mn(2+) is required as a cofactor.

The protein resides in the cytoplasm. The catalysed reaction is Release of an N-terminal amino acid, Xaa-|-Yaa-, in which Xaa is preferably Leu, but may be other amino acids including Pro although not Arg or Lys, and Yaa may be Pro. Amino acid amides and methyl esters are also readily hydrolyzed, but rates on arylamides are exceedingly low.. The enzyme catalyses Release of an N-terminal amino acid, preferentially leucine, but not glutamic or aspartic acids.. Its function is as follows. Presumably involved in the processing and regular turnover of intracellular proteins. Catalyzes the removal of unsubstituted N-terminal amino acids from various peptides. The protein is Probable cytosol aminopeptidase of Caulobacter vibrioides (strain ATCC 19089 / CIP 103742 / CB 15) (Caulobacter crescentus).